We begin with the raw amino-acid sequence, 123 residues long: Ribosome-binding factor A (123 aa).

Belongs to the RbfA family. Monomer. Binds 30S ribosomal subunits, but not 50S ribosomal subunits or 70S ribosomes.

The protein localises to the cytoplasm. Its function is as follows. One of several proteins that assist in the late maturation steps of the functional core of the 30S ribosomal subunit. Associates with free 30S ribosomal subunits (but not with 30S subunits that are part of 70S ribosomes or polysomes). Required for efficient processing of 16S rRNA. May interact with the 5'-terminal helix region of 16S rRNA. The chain is Ribosome-binding factor A from Prochlorococcus marinus (strain NATL1A).